A 353-amino-acid chain; its full sequence is Paraneoplastic antigen Ma1 homolog (353 aa).

It belongs to the PNMA family. Predominantly expressed in testis. Very low levels in the brain, including in the piriform cortex, hippocampus and some subcortical nuclei.

The protein localises to the nucleus. Its subcellular location is the nucleolus. The chain is Paraneoplastic antigen Ma1 homolog (Pnma1) from Mus musculus (Mouse).